Consider the following 848-residue polypeptide: Glutenin, high molecular weight subunit DX5 (848 aa).

A signal peptide spans 1 to 21 (MAKRLVLFVAVVVALVALTVA). Residues 124-804 (YYPGQASPQR…GQQSGQGQQG (681 aa)) form a disordered region. Composition is skewed to low complexity over residues 126 to 137 (PGQASPQRPGQG), 145 to 166 (QGYY…QGQP), 173 to 203 (PQQS…GQPG), 210 to 240 (QLQP…PGQG), 263 to 303 (QGQQ…GQSG), 310 to 351 (QQPG…PGQG), 359 to 411 (PGYY…PGQG), 419 to 468 (PGYY…PGQG), 476 to 527 (QGQQ…YPTS), 544 to 659 (QQPG…QGQP), 670 to 687 (GQGQ…GQPG), 709 to 727 (QQPG…GQGQ), and 739 to 795 (GQGQ…TGQG).

It belongs to the gliadin/glutenin family. In terms of assembly, disulfide-bridge linked aggregates.

Glutenins are high-molecular weight seed storage proteins of wheat endosperm. Thought to be responsible for the visco-elastic property of wheat dough. This Triticum aestivum (Wheat) protein is Glutenin, high molecular weight subunit DX5 (GLU-1D-1D).